Consider the following 241-residue polypeptide: Pyridoxal phosphate phosphatase PHOSPHO2 (241 aa).

The Nucleophile role is filled by Asp8. The Mg(2+) site is built by Asp8 and Asp10. Asp10 acts as the Proton donor in catalysis. Substrate contacts are provided by Asp19 and Asp99. Asp179 lines the Mg(2+) pocket.

Belongs to the HAD-like hydrolase superfamily. PHOSPHO family. Requires Mg(2+) as cofactor.

The enzyme catalyses pyridoxal 5'-phosphate + H2O = pyridoxal + phosphate. Its function is as follows. Phosphatase that has high activity toward pyridoxal 5'-phosphate (PLP). Also active at much lower level toward pyrophosphate, phosphoethanolamine (PEA), phosphocholine (PCho), phospho-l-tyrosine, fructose-6-phosphate, p-nitrophenyl phosphate, and h-glycerophosphate. The protein is Pyridoxal phosphate phosphatase PHOSPHO2 (PHOSPHO2) of Homo sapiens (Human).